The following is a 504-amino-acid chain: ATP synthase subunit alpha (504 aa).

Position 169 to 176 (169 to 176) interacts with ATP; it reads GDRQTGKT.

This sequence belongs to the ATPase alpha/beta chains family. As to quaternary structure, F-type ATPases have 2 components, CF(1) - the catalytic core - and CF(0) - the membrane proton channel. CF(1) has five subunits: alpha(3), beta(3), gamma(1), delta(1), epsilon(1). CF(0) has three main subunits: a(1), b(2) and c(9-12). The alpha and beta chains form an alternating ring which encloses part of the gamma chain. CF(1) is attached to CF(0) by a central stalk formed by the gamma and epsilon chains, while a peripheral stalk is formed by the delta and b chains.

The protein localises to the cell membrane. It catalyses the reaction ATP + H2O + 4 H(+)(in) = ADP + phosphate + 5 H(+)(out). Functionally, produces ATP from ADP in the presence of a proton gradient across the membrane. The alpha chain is a regulatory subunit. This is ATP synthase subunit alpha from Clostridium botulinum (strain Eklund 17B / Type B).